A 121-amino-acid chain; its full sequence is Large ribosomal subunit protein bL12 (121 aa).

This sequence belongs to the bacterial ribosomal protein bL12 family. Homodimer. Part of the ribosomal stalk of the 50S ribosomal subunit. Forms a multimeric L10(L12)X complex, where L10 forms an elongated spine to which 2 to 4 L12 dimers bind in a sequential fashion. Binds GTP-bound translation factors.

Its function is as follows. Forms part of the ribosomal stalk which helps the ribosome interact with GTP-bound translation factors. Is thus essential for accurate translation. The sequence is that of Large ribosomal subunit protein bL12 from Erwinia tasmaniensis (strain DSM 17950 / CFBP 7177 / CIP 109463 / NCPPB 4357 / Et1/99).